A 301-amino-acid chain; its full sequence is Thymidylate synthase (301 aa).

Residues arginine 38 and 163-164 (RR) contribute to the dUMP site. The active-site Nucleophile is the cysteine 183. Residues 203-206 (RSGD), asparagine 214, and 244-246 (HIY) contribute to the dUMP site. (6R)-5,10-methylene-5,6,7,8-tetrahydrofolate is bound at residue aspartate 206. Alanine 300 contacts (6R)-5,10-methylene-5,6,7,8-tetrahydrofolate.

It belongs to the thymidylate synthase family. In terms of assembly, homodimer.

The enzyme catalyses dUMP + (6R)-5,10-methylene-5,6,7,8-tetrahydrofolate = 7,8-dihydrofolate + dTMP. It functions in the pathway pyrimidine metabolism; dTTP biosynthesis. In terms of biological role, catalyzes the reductive methylation of deoxyuridylate to thymidylate. This chain is Thymidylate synthase, found in Varicella-zoster virus (strain Dumas) (HHV-3).